The primary structure comprises 430 residues: MRVGIKVLGCPKNEADCEVLAGVLREGGHEIVFDVKDADVVVLDTCAFIEDAKRESIDEIFSFVDAKDQYGYKLVVKGCLVQRYYEELKKEVPEVDQWIGVADPEEIANAIENGTDLVPDQPETVYRYRKRIDLEERPYAYVKISDGCDRGCTFCSIPSFKGSLRSRSIEDITREVEDLLKEGKKEIILVAQDTTSYGIDLYRKQALPDLLRRLNSLNGEFWIRVMYLHPDHLTEEIISAMLELDKVVKYFDVPVQHGSDKILKLMGRTKSSEELKKMLSSIRERFPDAVLRTSIIVGFPGETEEDFEELKQFVEEIQFDKLGAFVYSDEEGTVAFNLKEKVDPEMAKRRQEELLLLQAEISNSRLDRFVGKKLKFLVEGKEGKFLVGRTWTEAPEVDGVVFVRGKGKIGDFLEVVIKEHDEYDMWGSVI.

One can recognise an MTTase N-terminal domain in the interval 1–116 (MRVGIKVLGC…IANAIENGTD (116 aa)). 6 residues coordinate [4Fe-4S] cluster: cysteine 10, cysteine 46, cysteine 79, cysteine 148, cysteine 152, and cysteine 155. One can recognise a Radical SAM core domain in the interval 134–365 (LEERPYAYVK…LLQAEISNSR (232 aa)). The region spanning 367 to 430 (DRFVGKKLKF…DEYDMWGSVI (64 aa)) is the TRAM domain.

This sequence belongs to the methylthiotransferase family. RimO subfamily. [4Fe-4S] cluster is required as a cofactor.

Its subcellular location is the cytoplasm. The enzyme catalyses L-aspartate(89)-[ribosomal protein uS12]-hydrogen + (sulfur carrier)-SH + AH2 + 2 S-adenosyl-L-methionine = 3-methylsulfanyl-L-aspartate(89)-[ribosomal protein uS12]-hydrogen + (sulfur carrier)-H + 5'-deoxyadenosine + L-methionine + A + S-adenosyl-L-homocysteine + 2 H(+). Functionally, catalyzes the methylthiolation of an aspartic acid residue of ribosomal protein uS12. This is Ribosomal protein uS12 methylthiotransferase RimO from Thermotoga petrophila (strain ATCC BAA-488 / DSM 13995 / JCM 10881 / RKU-1).